The primary structure comprises 988 residues: DExH-box ATP-dependent RNA helicase DExH9 (988 aa).

The segment at 1 to 27 is disordered; sequence MGSVKRKSVEESSDSAPPQKVQREDDS. The region spanning 76 to 232 is the Helicase ATP-binding domain; it reads IKCLDNGESV…WVAKVHQQPC (157 aa). Position 89–96 (89–96) interacts with ATP; the sequence is AHTSAGKT. The DEVH box signature appears at 180–183; sequence DEVH. The Helicase C-terminal domain occupies 307–509; sequence DIFKLVKMII…SYNMLLNQLR (203 aa).

The protein belongs to the DExH box helicase family. SKI2 subfamily. In terms of tissue distribution, ubiquitous but preferentially expressed in active tissues.

It is found in the nucleus. It localises to the nucleolus. It catalyses the reaction ATP + H2O = ADP + phosphate + H(+). Functionally, ATP-dependent RNA helicase that associates with the RNA exosome complex. Required for proper rRNA biogenesis and development. Involved in the 3'-processing of the 7S pre-RNA to the mature 5.8S rRNA and also in the removal of rRNA maturation by-products. The polypeptide is DExH-box ATP-dependent RNA helicase DExH9 (Arabidopsis thaliana (Mouse-ear cress)).